Consider the following 145-residue polypeptide: Bacilliredoxin SERP1006 (145 aa).

It belongs to the bacilliredoxin family.

This chain is Bacilliredoxin SERP1006, found in Staphylococcus epidermidis (strain ATCC 35984 / DSM 28319 / BCRC 17069 / CCUG 31568 / BM 3577 / RP62A).